A 96-amino-acid chain; its full sequence is Muconolactone Delta-isomerase 2 (96 aa).

The protein belongs to the muconolactone Delta-isomerase family. Homodecamer.

The enzyme catalyses (S)-muconolactone = (4,5-dihydro-5-oxofuran-2-yl)-acetate. Its pathway is aromatic compound metabolism; beta-ketoadipate pathway; 5-oxo-4,5-dihydro-2-furylacetate from catechol: step 3/3. In Acinetobacter lwoffii, this protein is Muconolactone Delta-isomerase 2 (catC2).